Reading from the N-terminus, the 295-residue chain is Ribosomal RNA small subunit methyltransferase A (295 aa).

6 residues coordinate S-adenosyl-L-methionine: Asn40, Val42, Gly67, Glu88, Asp118, and Asn135.

It belongs to the class I-like SAM-binding methyltransferase superfamily. rRNA adenine N(6)-methyltransferase family. RsmA subfamily.

It is found in the cytoplasm. The enzyme catalyses adenosine(1518)/adenosine(1519) in 16S rRNA + 4 S-adenosyl-L-methionine = N(6)-dimethyladenosine(1518)/N(6)-dimethyladenosine(1519) in 16S rRNA + 4 S-adenosyl-L-homocysteine + 4 H(+). In terms of biological role, specifically dimethylates two adjacent adenosines (A1518 and A1519) in the loop of a conserved hairpin near the 3'-end of 16S rRNA in the 30S particle. May play a critical role in biogenesis of 30S subunits. The protein is Ribosomal RNA small subunit methyltransferase A of Arthrobacter sp. (strain FB24).